The primary structure comprises 362 residues: Heat-inducible transcription repressor HrcA (362 aa).

The protein belongs to the HrcA family.

Its function is as follows. Negative regulator of class I heat shock genes (grpE-dnaK-dnaJ and groELS operons). Prevents heat-shock induction of these operons. The sequence is that of Heat-inducible transcription repressor HrcA from Rhodopseudomonas palustris (strain BisB18).